We begin with the raw amino-acid sequence, 343 residues long: UDP-3-O-acylglucosamine N-acyltransferase (343 aa).

The active-site Proton acceptor is the histidine 238.

This sequence belongs to the transferase hexapeptide repeat family. LpxD subfamily. In terms of assembly, homotrimer.

It catalyses the reaction a UDP-3-O-[(3R)-3-hydroxyacyl]-alpha-D-glucosamine + a (3R)-hydroxyacyl-[ACP] = a UDP-2-N,3-O-bis[(3R)-3-hydroxyacyl]-alpha-D-glucosamine + holo-[ACP] + H(+). It functions in the pathway bacterial outer membrane biogenesis; LPS lipid A biosynthesis. Catalyzes the N-acylation of UDP-3-O-acylglucosamine using 3-hydroxyacyl-ACP as the acyl donor. Is involved in the biosynthesis of lipid A, a phosphorylated glycolipid that anchors the lipopolysaccharide to the outer membrane of the cell. The sequence is that of UDP-3-O-acylglucosamine N-acyltransferase from Marinomonas sp. (strain MWYL1).